A 100-amino-acid chain; its full sequence is Noncompact myelin-associated protein (100 aa).

The Extracellular segment spans residues 1–28; it reads MTTATTLGDAVFSLNMTRGEDILYKSSG. The helical transmembrane segment at 29-49 threads the bilayer; it reads AIVAAIVVVVVIIVTLVLILL. Residues 50–100 lie on the Cytoplasmic side of the membrane; sequence KMYNRRMRTRRELEPKSPKPPVPPALDPNSNGSQQPAAVTSDPADVPVETR. The disordered stretch occupies residues 58 to 100; it reads TRRELEPKSPKPPVPPALDPNSNGSQQPAAVTSDPADVPVETR. Residues 77–87 show a composition bias toward polar residues; that stretch reads PNSNGSQQPAA.

Glycosylated. In terms of tissue distribution, expressed in the peripheral nervous system Schwann cells (at protein level).

The protein resides in the cell membrane. Its function is as follows. Plays a role in myelin formation. In Rattus norvegicus (Rat), this protein is Noncompact myelin-associated protein (Ncmap).